The primary structure comprises 126 residues: Aspartate 1-decarboxylase (126 aa).

Ser25 acts as the Schiff-base intermediate with substrate; via pyruvic acid in catalysis. Ser25 bears the Pyruvic acid (Ser) mark. A substrate-binding site is contributed by Thr57. Residue Tyr58 is the Proton donor of the active site. Residue 73–75 (GAA) coordinates substrate.

This sequence belongs to the PanD family. As to quaternary structure, heterooctamer of four alpha and four beta subunits. It depends on pyruvate as a cofactor. Post-translationally, is synthesized initially as an inactive proenzyme, which is activated by self-cleavage at a specific serine bond to produce a beta-subunit with a hydroxyl group at its C-terminus and an alpha-subunit with a pyruvoyl group at its N-terminus.

The protein resides in the cytoplasm. It carries out the reaction L-aspartate + H(+) = beta-alanine + CO2. The protein operates within cofactor biosynthesis; (R)-pantothenate biosynthesis; beta-alanine from L-aspartate: step 1/1. Functionally, catalyzes the pyruvoyl-dependent decarboxylation of aspartate to produce beta-alanine. The sequence is that of Aspartate 1-decarboxylase from Yersinia pestis bv. Antiqua (strain Antiqua).